The chain runs to 264 residues: Putative lipoate-protein ligase A (264 aa).

In terms of domain architecture, BPL/LPL catalytic spans 26–213 (EHGIAIARLW…SVKHALGEPE (188 aa)). ATP is bound by residues Arg68, 73–76 (GAVF), and Lys130. Lys130 contacts (R)-lipoate.

Belongs to the LplA family. As to quaternary structure, monomer.

The protein resides in the cytoplasm. It carries out the reaction L-lysyl-[lipoyl-carrier protein] + (R)-lipoate + ATP = N(6)-[(R)-lipoyl]-L-lysyl-[lipoyl-carrier protein] + AMP + diphosphate + H(+). Its pathway is protein modification; protein lipoylation via exogenous pathway; protein N(6)-(lipoyl)lysine from lipoate: step 1/2. It participates in protein modification; protein lipoylation via exogenous pathway; protein N(6)-(lipoyl)lysine from lipoate: step 2/2. Functionally, catalyzes both the ATP-dependent activation of exogenously supplied lipoate to lipoyl-AMP and the transfer of the activated lipoyl onto the lipoyl domains of lipoate-dependent enzymes. In Aeropyrum pernix (strain ATCC 700893 / DSM 11879 / JCM 9820 / NBRC 100138 / K1), this protein is Putative lipoate-protein ligase A (lplA).